Reading from the N-terminus, the 269-residue chain is Energy-coupling factor transporter ATP-binding protein EcfA1 (269 aa).

Positions 8–242 (IVFKNVSFQY…AEELTRIGLD (235 aa)) constitute an ABC transporter domain. 42 to 49 (GHNGSGKS) contacts ATP.

This sequence belongs to the ABC transporter superfamily. Energy-coupling factor EcfA family. Forms a stable energy-coupling factor (ECF) transporter complex composed of 2 membrane-embedded substrate-binding proteins (S component), 2 ATP-binding proteins (A component) and 2 transmembrane proteins (T component).

It localises to the cell membrane. Its function is as follows. ATP-binding (A) component of a common energy-coupling factor (ECF) ABC-transporter complex. Unlike classic ABC transporters this ECF transporter provides the energy necessary to transport a number of different substrates. This Staphylococcus aureus (strain Mu50 / ATCC 700699) protein is Energy-coupling factor transporter ATP-binding protein EcfA1.